The primary structure comprises 267 residues: NAD kinase 2 (267 aa).

Aspartate 52 serves as the catalytic Proton acceptor. Residues 52–53 (DA), 124–125 (NE), arginine 151, aspartate 153, 164–169 (TAYNKS), and alanine 188 contribute to the NAD(+) site.

It belongs to the NAD kinase family. The cofactor is a divalent metal cation.

It localises to the cytoplasm. The enzyme catalyses NAD(+) + ATP = ADP + NADP(+) + H(+). Its function is as follows. Involved in the regulation of the intracellular balance of NAD and NADP, and is a key enzyme in the biosynthesis of NADP. Catalyzes specifically the phosphorylation on 2'-hydroxyl of the adenosine moiety of NAD to yield NADP. The protein is NAD kinase 2 of Bacillus cereus (strain ATCC 10987 / NRS 248).